The chain runs to 70 residues: Large ribosomal subunit protein eL38 (70 aa).

This sequence belongs to the eukaryotic ribosomal protein eL38 family.

This Branchiostoma belcheri (Amphioxus) protein is Large ribosomal subunit protein eL38 (RPL38).